A 212-amino-acid chain; its full sequence is Peptide methionine sulfoxide reductase MsrA (212 aa).

The segment covering M1 to D14 has biased composition (polar residues). A disordered region spans residues M1–T21. C52 is a catalytic residue.

It belongs to the MsrA Met sulfoxide reductase family.

It catalyses the reaction L-methionyl-[protein] + [thioredoxin]-disulfide + H2O = L-methionyl-(S)-S-oxide-[protein] + [thioredoxin]-dithiol. The enzyme catalyses [thioredoxin]-disulfide + L-methionine + H2O = L-methionine (S)-S-oxide + [thioredoxin]-dithiol. Has an important function as a repair enzyme for proteins that have been inactivated by oxidation. Catalyzes the reversible oxidation-reduction of methionine sulfoxide in proteins to methionine. This chain is Peptide methionine sulfoxide reductase MsrA, found in Pectobacterium atrosepticum (strain SCRI 1043 / ATCC BAA-672) (Erwinia carotovora subsp. atroseptica).